Here is a 368-residue protein sequence, read N- to C-terminus: Alanine racemase (368 aa).

Catalysis depends on lysine 40, which acts as the Proton acceptor; specific for D-alanine. Lysine 40 is modified (N6-(pyridoxal phosphate)lysine). Arginine 134 is a binding site for substrate. Tyrosine 263 (proton acceptor; specific for L-alanine) is an active-site residue. Substrate is bound at residue methionine 310.

The protein belongs to the alanine racemase family. The cofactor is pyridoxal 5'-phosphate.

It carries out the reaction L-alanine = D-alanine. The protein operates within amino-acid biosynthesis; D-alanine biosynthesis; D-alanine from L-alanine: step 1/1. Catalyzes the interconversion of L-alanine and D-alanine. May also act on other amino acids. In Listeria monocytogenes serotype 4a (strain HCC23), this protein is Alanine racemase (alr).